Here is a 195-residue protein sequence, read N- to C-terminus: Elongation factor P (195 aa).

It belongs to the elongation factor P family.

It localises to the cytoplasm. It functions in the pathway protein biosynthesis; polypeptide chain elongation. Functionally, involved in peptide bond synthesis. Stimulates efficient translation and peptide-bond synthesis on native or reconstituted 70S ribosomes in vitro. Probably functions indirectly by altering the affinity of the ribosome for aminoacyl-tRNA, thus increasing their reactivity as acceptors for peptidyl transferase. The sequence is that of Elongation factor P from Rhodopirellula baltica (strain DSM 10527 / NCIMB 13988 / SH1).